The primary structure comprises 137 residues: Large ribosomal subunit protein uL14A (137 aa).

Ser-2 is subject to N-acetylserine. Lys-106 and Lys-110 each carry N6,N6-dimethyllysine; by RKM1.

Belongs to the universal ribosomal protein uL14 family. As to quaternary structure, component of the large ribosomal subunit (LSU). Mature yeast ribosomes consist of a small (40S) and a large (60S) subunit. The 40S small subunit contains 1 molecule of ribosomal RNA (18S rRNA) and 33 different proteins (encoded by 57 genes). The large 60S subunit contains 3 rRNA molecules (25S, 5.8S and 5S rRNA) and 46 different proteins (encoded by 81 genes). In terms of processing, methylated by RKM1 at 2 different sites, but it is unclear which are the 2 methylated residues among Lys-40, Lys-106 and/or Lys-110.

The protein localises to the cytoplasm. Its function is as follows. Component of the ribosome, a large ribonucleoprotein complex responsible for the synthesis of proteins in the cell. The small ribosomal subunit (SSU) binds messenger RNAs (mRNAs) and translates the encoded message by selecting cognate aminoacyl-transfer RNA (tRNA) molecules. The large subunit (LSU) contains the ribosomal catalytic site termed the peptidyl transferase center (PTC), which catalyzes the formation of peptide bonds, thereby polymerizing the amino acids delivered by tRNAs into a polypeptide chain. The nascent polypeptides leave the ribosome through a tunnel in the LSU and interact with protein factors that function in enzymatic processing, targeting, and the membrane insertion of nascent chains at the exit of the ribosomal tunnel. The chain is Large ribosomal subunit protein uL14A from Saccharomyces cerevisiae (strain ATCC 204508 / S288c) (Baker's yeast).